Here is a 166-residue protein sequence, read N- to C-terminus: Large ribosomal subunit protein uL10 (166 aa).

The protein belongs to the universal ribosomal protein uL10 family. As to quaternary structure, part of the ribosomal stalk of the 50S ribosomal subunit. The N-terminus interacts with L11 and the large rRNA to form the base of the stalk. The C-terminus forms an elongated spine to which L12 dimers bind in a sequential fashion forming a multimeric L10(L12)X complex.

Its function is as follows. Forms part of the ribosomal stalk, playing a central role in the interaction of the ribosome with GTP-bound translation factors. In Streptococcus equi subsp. zooepidemicus (strain MGCS10565), this protein is Large ribosomal subunit protein uL10.